The chain runs to 549 residues: Undecaprenyl phosphate-alpha-4-amino-4-deoxy-L-arabinose arabinosyl transferase (549 aa).

The next 12 membrane-spanning stretches (helical) occupy residues 9 to 29 (LLLI…GLWI), 80 to 100 (LFGV…LAYL), 112 to 132 (SLAC…SGYA), 136 to 156 (PQFT…LDAG), 176 to 196 (FLTK…PYML), 204 to 224 (LLGY…PWAL), 256 to 276 (PWWF…GLLP), 288 to 308 (QAPV…FSLS), 312 to 332 (LPTY…HALV), 346 to 366 (NGLL…YLQL), 376 to 396 (FELF…LAQW), and 402 to 422 (AWAA…AAMP).

Belongs to the glycosyltransferase 83 family.

Its subcellular location is the cell inner membrane. It carries out the reaction 4-amino-4-deoxy-alpha-L-arabinopyranosyl di-trans,octa-cis-undecaprenyl phosphate + lipid IVA = lipid IIA + di-trans,octa-cis-undecaprenyl phosphate.. Its pathway is lipopolysaccharide metabolism; 4-amino-4-deoxy-beta-L-arabinose-lipid A biosynthesis. Its function is as follows. Catalyzes the transfer of the L-Ara4N moiety of the glycolipid undecaprenyl phosphate-alpha-L-Ara4N to lipid A. The modified arabinose is attached to lipid A and is required for resistance to polymyxin and cationic antimicrobial peptides. In Pseudomonas aeruginosa (strain ATCC 15692 / DSM 22644 / CIP 104116 / JCM 14847 / LMG 12228 / 1C / PRS 101 / PAO1), this protein is Undecaprenyl phosphate-alpha-4-amino-4-deoxy-L-arabinose arabinosyl transferase.